The primary structure comprises 346 residues: Putative D-xylulose reductase (346 aa).

Residues C39, H64, and E150 each contribute to the Zn(2+) site.

This sequence belongs to the zinc-containing alcohol dehydrogenase family. Zn(2+) serves as cofactor.

The catalysed reaction is xylitol + NAD(+) = D-xylulose + NADH + H(+). This is Putative D-xylulose reductase from Rhizobium meliloti (strain 1021) (Ensifer meliloti).